We begin with the raw amino-acid sequence, 469 residues long: MKHIRTRFAPSPTGYLHIGGVRTALFSWLFARQNNGAFILRIEDTDVARSTQASVDAILEGLRWLQIDWNEGPYYQSQRMDRYREVIEQLVKSDDAYRCYCSKERLIELRNTQLKNKQKPRYDGFCRDKAPRQSNEPFVIRFRNPVEGAVVFDDLIRGTISIDNRELDDLIIARSDGGPTYNLTVVVDDWDMKITHVIRGDDHINNTPRQINILHALGAELPHYGHVPMILGPDGKRLSKRHGAVSVLQYRDEGYLPEALMNYLIRLGWAHGDQEIFSREEMVQLFDISAVSRSPAAFNPEKLLWLNQHYLKTVSPTIIAEAFATQLEKAGTDLRNGPSLEQVIALQAERTKTLKEMAQRSLYFYQEVRSYDEKAARKHLLATIVEPLQRVRERLASLPSWEKEAIHEVIVETAQLHQLKLGQLAQPIRVALTGDTVSPPIDATLYLIGRDSALKRLDHAIRFIHQGMG.

The 'HIGH' region motif lies at 10-20 (PSPTGYLHIGG). Zn(2+)-binding residues include C99, C101, C126, and D128. The short motif at 237-241 (RLSKR) is the 'KMSKS' region element. K240 lines the ATP pocket.

The protein belongs to the class-I aminoacyl-tRNA synthetase family. Glutamate--tRNA ligase type 1 subfamily. As to quaternary structure, monomer. Zn(2+) serves as cofactor.

The protein localises to the cytoplasm. It carries out the reaction tRNA(Glu) + L-glutamate + ATP = L-glutamyl-tRNA(Glu) + AMP + diphosphate. In terms of biological role, catalyzes the attachment of glutamate to tRNA(Glu) in a two-step reaction: glutamate is first activated by ATP to form Glu-AMP and then transferred to the acceptor end of tRNA(Glu). This chain is Glutamate--tRNA ligase 2, found in Coxiella burnetii (strain CbuG_Q212) (Coxiella burnetii (strain Q212)).